We begin with the raw amino-acid sequence, 202 residues long: Alpha-1-acid glycoprotein (202 aa).

The N-terminal stretch at 1-18 (MALLWALAVLSHLPLLDA) is a signal peptide. Asparagine 34, asparagine 57, asparagine 94, asparagine 104, and asparagine 136 each carry an N-linked (GlcNAc...) asparagine glycan. Cysteine 91 and cysteine 184 are joined by a disulfide.

Belongs to the calycin superfamily. Lipocalin family.

The protein resides in the secreted. In terms of biological role, functions as a transport protein in the blood stream. Binds various ligands in the interior of its beta-barrel domain. Appears to function in modulating the activity of the immune system during the acute-phase reaction. The polypeptide is Alpha-1-acid glycoprotein (ORM1) (Bos taurus (Bovine)).